Here is a 61-residue protein sequence, read N- to C-terminus: 2S seed storage albumin protein (61 aa).

This sequence belongs to the 2S seed storage albumins family. As to quaternary structure, the mature protein consists of a small and a large chain linked by 2 disulfide bonds.

Functionally, this is a 2S seed storage protein. Inhibits cell-free protein synthesis. The sequence is that of 2S seed storage albumin protein from Cucurbita moschata (Winter crookneck squash).